Reading from the N-terminus, the 775-residue chain is E3 ubiquitin-protein ligase ICP0 (775 aa).

Residues 1–112 form a disordered region; it reads MEPRPGASTR…PPREDGGSDE (112 aa). Basic and acidic residues-rich tracts occupy residues 10 to 21 and 45 to 57; these read RRPEGRPQREPA and VGGR…HDDD. A compositionally biased stretch (acidic residues) spans 58-69; it reads SASEADSTDTEL. Thr67 carries the post-translational modification Phosphothreonine; by host; by CK1. The RING-type zinc finger occupies 116 to 157; that stretch reads CAVCTDEIAPHLRCDTFPCMHRFCIPCMKTWMQLRNTCPLCN. The interval 221–636 is disordered; that stretch reads RALSPTHPEP…HAETSGAVPA (416 aa). Acidic residues predominate over residues 231–243; that stretch reads TTDEDDDDLDDAD. The span at 258–284 shows a compositional bias: low complexity; that stretch reads RRGAAAPPVTGGASHAAPQPAAARTAP. Polar residues predominate over residues 293 to 302; that stretch reads GSSNTNTTTN. The segment covering 310-321 has biased composition (low complexity); that stretch reads RQSRAAAPRGAS. Positions 322-331 are enriched in gly residues; it reads GPSGGVGVGV. Positions 369–390 are enriched in pro residues; that stretch reads PASPHRPPAAPMPGSAPRPGPP. The segment covering 391 to 409 has biased composition (low complexity); that stretch reads ASAAASGPARPRAAVAPCV. Residues 410–421 are compositionally biased toward pro residues; that stretch reads RAPPPGPGPRAP. Residues 422–431 are compositionally biased toward low complexity; that stretch reads APGAEPAARP. Polar residues predominate over residues 439-453; sequence QSHSSLAQAANQEQS. Residues 464 to 476 show a composition bias toward gly residues; that stretch reads GSGGPGVEGGHGP. Over residues 477 to 493 the composition is skewed to low complexity; the sequence is SRGAAPSGAAPLPSAAS. Residues 509-519 are compositionally biased toward polar residues; sequence GQENPSPQSTR. Over residues 539-549 the composition is skewed to gly residues; the sequence is GPGGRGQGGPG. Low complexity predominate over residues 550-592; sequence TPLTSSAASASSSSASSSSAPTPAGAASSAAGAASSSASASSG. The span at 617–626 shows a compositional bias: basic residues; the sequence is GPRKCARKTR.

The protein belongs to the simplexviruses ICp0 family. In terms of assembly, interacts directly with human RCOR1/CoREST protein, leading to the disruption of the human BHC corepressor complex. Interacts with human CENPA, leading to its degradation. Interacts with human USP7; this interaction modulates ICP0 stability. Interacts with human CDC34. Interacts (when phosphorylated) with human RNF8 (via FHA domain). Interacts with human TRIM27. Interacts with human ZBP1. Interacts with host MORC3; this interaction promotes the degradation of host MORC3. In terms of processing, phosphorylated at Thr-67, leading to promote interaction with host RNF8. Phosphorylated by host CHEK2; leading to increased SUMO-targeted ubiquitin ligase activity of ICP0. Post-translationally, auto-ubiquitinated. Deubiquitinated by host USP7; leading to stabilize it.

It is found in the host cytoplasm. The protein resides in the host nucleus. It carries out the reaction S-ubiquitinyl-[E2 ubiquitin-conjugating enzyme]-L-cysteine + [acceptor protein]-L-lysine = [E2 ubiquitin-conjugating enzyme]-L-cysteine + N(6)-ubiquitinyl-[acceptor protein]-L-lysine.. SUMO-targeted ubiquitin ligase that plays an essential role in nuclear antiviral defense evasion triggered by dsDNA viruses. Acts during the initial stages of lytic infection and the reactivation of latent viral genome. Prevents the antiviral effect of nuclear bodies by degrading host PML, SP100 and MORC3. Prevents antiviral response to viral DNA induced by IFI16 by degrading it. Additionally, inhibits host IRF3 nuclear signaling to prevent interferon production by the infected cells. Interestingly, the E3 ubiquitin ligase activity associated with the RING finger domain does not seem to be directly required to inhibit the activation of IRF3 but instead plays a critical role in modulating the cellular localization of ICP0. Upon reactivation of latent genome, suppresses the silencing of viral DNA by dissociating either HDAC1 or HDAC2 from the HDAC-RCOR1-REST-KDM1A complex localized at the ND10 structures and causes their dispersal. Two cellular histone ubiquitin ligases RNF8 and RNF168 are also targeted by ICP0 for degradation, leading to a loss of ubiquitinated forms of H2A, a relief of transcriptional repression, and the activation of latent viral genomes. Enhances the localization of host CCND3 to ND10 bodies that serve as precursors of replication compartments to enable efficient viral replication. Like many RING-finger E3 ubiquitin ligases, ICP0 can induce its own ubiquitination, an activity that promotes its instability due to its targeting to the 26S proteasome for degradation. ICP0 restricts this process by recruiting the cellular ubiquitin-specific protease USP7 that cleaves the anchored ubiquitin chains from ICP0, thereby promoting its stabilization. The polypeptide is E3 ubiquitin-protein ligase ICP0 (ICP0) (Homo sapiens (Human)).